The sequence spans 585 residues: Arginine--tRNA ligase (585 aa).

Positions 130–140 (ANPTGPMHVGH) match the 'HIGH' region motif.

This sequence belongs to the class-I aminoacyl-tRNA synthetase family. In terms of assembly, monomer.

The protein resides in the cytoplasm. The enzyme catalyses tRNA(Arg) + L-arginine + ATP = L-arginyl-tRNA(Arg) + AMP + diphosphate. In Methylorubrum extorquens (strain PA1) (Methylobacterium extorquens), this protein is Arginine--tRNA ligase.